Consider the following 256-residue polypeptide: Imidazole glycerol phosphate synthase subunit HisF (256 aa).

Active-site residues include Asp12 and Asp131.

This sequence belongs to the HisA/HisF family. Heterodimer of HisH and HisF.

Its subcellular location is the cytoplasm. The enzyme catalyses 5-[(5-phospho-1-deoxy-D-ribulos-1-ylimino)methylamino]-1-(5-phospho-beta-D-ribosyl)imidazole-4-carboxamide + L-glutamine = D-erythro-1-(imidazol-4-yl)glycerol 3-phosphate + 5-amino-1-(5-phospho-beta-D-ribosyl)imidazole-4-carboxamide + L-glutamate + H(+). It functions in the pathway amino-acid biosynthesis; L-histidine biosynthesis; L-histidine from 5-phospho-alpha-D-ribose 1-diphosphate: step 5/9. IGPS catalyzes the conversion of PRFAR and glutamine to IGP, AICAR and glutamate. The HisF subunit catalyzes the cyclization activity that produces IGP and AICAR from PRFAR using the ammonia provided by the HisH subunit. This Bifidobacterium longum (strain DJO10A) protein is Imidazole glycerol phosphate synthase subunit HisF.